We begin with the raw amino-acid sequence, 257 residues long: Pyridoxal phosphate homeostasis protein (257 aa).

Residue Ser2 is modified to N-acetylserine. Residue Lys49 is modified to N6-(pyridoxal phosphate)lysine.

The protein belongs to the pyridoxal phosphate-binding protein YggS/PROSC family.

The protein localises to the cytoplasm. It is found in the nucleus. Its function is as follows. Pyridoxal 5'-phosphate (PLP)-binding protein, which may be involved in intracellular homeostatic regulation of pyridoxal 5'-phosphate (PLP), the active form of vitamin B6. The sequence is that of Pyridoxal phosphate homeostasis protein from Saccharomyces cerevisiae (strain ATCC 204508 / S288c) (Baker's yeast).